A 228-amino-acid chain; its full sequence is Probable septum site-determining protein MinC (228 aa).

This sequence belongs to the MinC family. As to quaternary structure, interacts with MinD and FtsZ.

Functionally, cell division inhibitor that blocks the formation of polar Z ring septums. Rapidly oscillates between the poles of the cell to destabilize FtsZ filaments that have formed before they mature into polar Z rings. Prevents FtsZ polymerization. The polypeptide is Probable septum site-determining protein MinC (Yersinia enterocolitica serotype O:8 / biotype 1B (strain NCTC 13174 / 8081)).